Consider the following 321-residue polypeptide: Peptide transport system permease protein SapB (321 aa).

The next 8 helical transmembrane spans lie at 8–28, 41–61, 82–102, 117–137, 150–170, 180–200, 249–269, and 289–309; these read HILW…VILL, IYIG…GITY, CFIT…ISAV, YVGL…VAAL, LLYE…FMEV, ILQH…MEII, VFTL…WPGI, and VIVI…FTFI. Residues 75–303 form the ABC transmembrane type-1 domain; it reads LPPTLELCFI…VCIILIDTFT (229 aa).

This sequence belongs to the binding-protein-dependent transport system permease family. OppBC subfamily.

The protein localises to the cell inner membrane. Functionally, involved in a peptide intake transport system that plays a role in the resistance to antimicrobial peptides. The protein is Peptide transport system permease protein SapB (sapB) of Haemophilus influenzae (strain ATCC 51907 / DSM 11121 / KW20 / Rd).